We begin with the raw amino-acid sequence, 276 residues long: MSQAALNTRNSEEEVSSRRNNGTRLAGILFLLTVLTTVLVSGWVVLGWMEDAQRLPLSKLVLTGERHYTRNDDIRQSILALGEPGTFMTQDVNIIQTQIEQRLPWIKQVSVRKQWPDELKIHLVEYVPIARWNDQHMVDAEGNTFSVPPERTSKQVLPMLYGPEGSANEVLQGYREMGQMLAKDRFTLKEAAMTARRSWQLTLNNDIKLNLGRGDTMKRLARFVELYPVLQQQAQTDGKRISYVDLRYDSGAAVGWAPLPPEESTQQQNQAQAEQQ.

Residues 1–27 (MSQAALNTRNSEEEVSSRRNNGTRLAG) are Cytoplasmic-facing. Residues 28–48 (ILFLLTVLTTVLVSGWVVLGW) form a helical membrane-spanning segment. The Periplasmic portion of the chain corresponds to 49 to 276 (MEDAQRLPLS…QQNQAQAEQQ (228 aa)). The POTRA domain occupies 55-126 (LPLSKLVLTG…DELKIHLVEY (72 aa)). Residues 255-276 (GWAPLPPEESTQQQNQAQAEQQ) form a disordered region. Positions 266 to 276 (QQQNQAQAEQQ) are enriched in low complexity.

It belongs to the FtsQ/DivIB family. FtsQ subfamily. Part of a complex composed of FtsB, FtsL and FtsQ. The complex can be formed before its localization to the division site. This tripartite complex can be divided further into a subcomplex of FtsB and FtsL, which forms in the absence of FtsQ. Interacts with FtsA, FtsK, FtsL, FtsB, FtsW, FtsI, FtsN, FtsX and YmgF.

Its subcellular location is the cell inner membrane. Functionally, essential cell division protein. May link together the upstream cell division proteins, which are predominantly cytoplasmic, with the downstream cell division proteins, which are predominantly periplasmic. May control correct divisome assembly. The protein is Cell division protein FtsQ of Escherichia coli (strain K12).